The chain runs to 369 residues: Glutamate 5-kinase (369 aa).

Lysine 7 contributes to the ATP binding site. Substrate contacts are provided by serine 48, aspartate 135, and asparagine 147. ATP contacts are provided by residues 167–168 and 208–214; these read TD and SGGMASK. One can recognise a PUA domain in the interval 275–353; that stretch reads AGALHLDEGA…HEIAALLGIE (79 aa).

Belongs to the glutamate 5-kinase family.

It localises to the cytoplasm. It catalyses the reaction L-glutamate + ATP = L-glutamyl 5-phosphate + ADP. The protein operates within amino-acid biosynthesis; L-proline biosynthesis; L-glutamate 5-semialdehyde from L-glutamate: step 1/2. Functionally, catalyzes the transfer of a phosphate group to glutamate to form L-glutamate 5-phosphate. The protein is Glutamate 5-kinase of Gloeobacter violaceus (strain ATCC 29082 / PCC 7421).